A 231-amino-acid chain; its full sequence is Lipoprotein-releasing system ATP-binding protein LolD (231 aa).

The ABC transporter domain maps to 6-231 (LQVQAVSKSY…YLQAVAEHAQ (226 aa)). Position 42 to 49 (42 to 49 (GTSGSGKS)) interacts with ATP.

Belongs to the ABC transporter superfamily. Lipoprotein translocase (TC 3.A.1.125) family. In terms of assembly, the complex is composed of two ATP-binding proteins (LolD) and two transmembrane proteins (LolC and LolE).

Its subcellular location is the cell inner membrane. In terms of biological role, part of the ABC transporter complex LolCDE involved in the translocation of mature outer membrane-directed lipoproteins, from the inner membrane to the periplasmic chaperone, LolA. Responsible for the formation of the LolA-lipoprotein complex in an ATP-dependent manner. The protein is Lipoprotein-releasing system ATP-binding protein LolD of Shewanella sp. (strain MR-7).